A 338-amino-acid polypeptide reads, in one-letter code: Tagatose 1,6-diphosphate aldolase (338 aa).

This sequence belongs to the aldolase LacD family.

It catalyses the reaction D-tagatofuranose 1,6-bisphosphate = D-glyceraldehyde 3-phosphate + dihydroxyacetone phosphate. Its pathway is carbohydrate metabolism; D-tagatose 6-phosphate degradation; D-glyceraldehyde 3-phosphate and glycerone phosphate from D-tagatose 6-phosphate: step 2/2. The protein is Tagatose 1,6-diphosphate aldolase of Listeria monocytogenes serotype 4b (strain CLIP80459).